A 592-amino-acid chain; its full sequence is Insulin-like growth factor 2 mRNA-binding protein 2 (592 aa).

2 RRM domains span residues 3–76 (NKLY…YSVS) and 82–157 (RRIQ…YIPD). At S11 the chain carries Phosphoserine. A disordered region spans residues 157 to 182 (DEEVSSPSPPHRAREQGHGPGSSSQA). Residues S162 and S164 each carry the phosphoserine modification. 4 KH domains span residues 186–251 (DFPL…CRMI), 267–334 (EVPL…EIEI), 420–485 (QETV…QGRI), and 502–568 (KLEA…QRKI). T543 carries the post-translational modification Phosphothreonine.

This sequence belongs to the RRM IMP/VICKZ family. As to quaternary structure, can form homooligomers and heterooligomers with IGF2BP1 and IGF2BP3 in an RNA-dependent manner. Interacts with HNRPD. Interacts with IGF2BP1. Interacts with ELAVL1, DHX9, HNRNPU, MATR3 and PABPC1. As to expression, expressed in oocytes, granulosa cells of small and growing follicles and Leydig cells of the testis (at protein level). Expressed in testis and ovary.

Its subcellular location is the nucleus. The protein localises to the cytoplasm. It localises to the P-body. It is found in the stress granule. In terms of biological role, RNA-binding factor that recruits target transcripts to cytoplasmic protein-RNA complexes (mRNPs). This transcript 'caging' into mRNPs allows mRNA transport and transient storage. It also modulates the rate and location at which target transcripts encounter the translational apparatus and shields them from endonuclease attacks or microRNA-mediated degradation. Preferentially binds to N6-methyladenosine (m6A)-containing mRNAs and increases their stability. Binds to the 5'-UTR of the insulin-like growth factor 2 (IGF2) mRNAs. Binding is isoform-specific. Binds to beta-actin/ACTB and MYC transcripts. Increases MYC mRNA stability by binding to the coding region instability determinant (CRD) and binding is enhanced by m6A-modification of the CRD. The sequence is that of Insulin-like growth factor 2 mRNA-binding protein 2 (Igf2bp2) from Mus musculus (Mouse).